The following is an 88-amino-acid chain: U-scoloptoxin(XY)-Er1a (88 aa).

A signal peptide spans M1 to S24. The segment at R66 to A88 is disordered. Positions E79 to A88 are excised as a propeptide.

This sequence belongs to the scoloptoxin-XY family. Contains 3 disulfide bonds. As to expression, expressed by the venom gland.

It localises to the secreted. The sequence is that of U-scoloptoxin(XY)-Er1a from Ethmostigmus rubripes (Giant centipede).